The following is a 264-amino-acid chain: Pro-opiomelanocortin (264 aa).

Residues 1-26 (MPRSCCSRSGALLLALLLQASMEVRG) form the signal peptide. Phe-87 carries the post-translational modification Phenylalanine amide. Disordered stretches follow at residues 88-204 (GRRN…DLEH) and 219-238 (RMEH…GGFM). An N-linked (GlcNAc...) asparagine glycan is attached at Asn-91. Basic and acidic residues-rich tracts occupy residues 99 to 122 (QKRE…EPRG) and 130 to 142 (REGK…EHFR). Glu-131 is modified (glutamic acid 1-amide). Position 135 is an N-acetylserine; in Corticotropin (Ser-135). Valine amide is present on Val-147. Position 165 is a phosphoserine (Ser-165). Residues 172–186 (EFKRELTGQRPRAGD) show a composition bias toward basic and acidic residues. Residues 189-199 (DGPADDGAGPR) show a composition bias toward low complexity. Over residues 219 to 234 (RMEHFRWGSPPKDKRY) the composition is skewed to basic and acidic residues.

This sequence belongs to the POMC family. Post-translationally, specific enzymatic cleavages at paired basic residues yield the different active peptides. In terms of tissue distribution, ACTH and MSH are produced by the pituitary gland.

It is found in the secreted. In terms of biological role, stimulates the adrenal glands to release cortisol. Functionally, anorexigenic peptide. Increases the pigmentation of skin by increasing melanin production in melanocytes. Increases the pigmentation of skin by increasing melanin production in melanocytes. Its function is as follows. Endogenous orexigenic opiate. In terms of biological role, endogenous opiate. The protein is Pro-opiomelanocortin (POMC) of Macaca nemestrina (Pig-tailed macaque).